The chain runs to 292 residues: Elongation factor Ts (292 aa).

The interval 80–83 (TDFV) is involved in Mg(2+) ion dislocation from EF-Tu.

It belongs to the EF-Ts family.

The protein resides in the cytoplasm. Functionally, associates with the EF-Tu.GDP complex and induces the exchange of GDP to GTP. It remains bound to the aminoacyl-tRNA.EF-Tu.GTP complex up to the GTP hydrolysis stage on the ribosome. This Pediococcus pentosaceus (strain ATCC 25745 / CCUG 21536 / LMG 10740 / 183-1w) protein is Elongation factor Ts.